Reading from the N-terminus, the 239-residue chain is Ribosomal RNA small subunit methyltransferase G (239 aa).

Residues G75, L80, 126 to 127 (AE), and R142 each bind S-adenosyl-L-methionine.

Belongs to the methyltransferase superfamily. RNA methyltransferase RsmG family.

The protein resides in the cytoplasm. In terms of biological role, specifically methylates the N7 position of guanine in position 518 of 16S rRNA. In Streptomyces coelicolor (strain ATCC BAA-471 / A3(2) / M145), this protein is Ribosomal RNA small subunit methyltransferase G.